The primary structure comprises 209 residues: MSGKKRTASSNRWMLEHFDDHYVKLAQKRGLRSRAAFKLEELQQKDQLIRPGMTVVDLGAAPGGWSQVAVKLAGDKGKVIACDILPMDPIVGVDFLQGDFREEKVLEALLTRVGADKVDVVLSDMAPNMSGSDGVDQPRAMYLVELALDMCHQVLAPNGSFAVKVFQGEGFDEYMKAVKEAFKVVKTRKPDSSRARSREVYLVATGYKL.

S-adenosyl-L-methionine is bound by residues Gly-63, Trp-65, Asp-83, Asp-99, and Asp-124. Catalysis depends on Lys-164, which acts as the Proton acceptor.

It belongs to the class I-like SAM-binding methyltransferase superfamily. RNA methyltransferase RlmE family.

Its subcellular location is the cytoplasm. It carries out the reaction uridine(2552) in 23S rRNA + S-adenosyl-L-methionine = 2'-O-methyluridine(2552) in 23S rRNA + S-adenosyl-L-homocysteine + H(+). Specifically methylates the uridine in position 2552 of 23S rRNA at the 2'-O position of the ribose in the fully assembled 50S ribosomal subunit. This is Ribosomal RNA large subunit methyltransferase E from Shewanella sp. (strain MR-7).